The following is a 378-amino-acid chain: Carbamoyl phosphate synthase small chain (378 aa).

Positions 1–189 (MTKPAILALA…DSHPTIDAAD (189 aa)) are CPSase. Ser-47, Gly-241, and Gly-243 together coordinate L-glutamine. In terms of domain architecture, Glutamine amidotransferase type-1 spans 193–378 (HVVAFDYGVK…RFTDAMAKRR (186 aa)). Catalysis depends on Cys-269, which acts as the Nucleophile. Leu-270, Gln-273, Asn-311, Gly-313, and Phe-314 together coordinate L-glutamine. Residues His-353 and Glu-355 contribute to the active site.

The protein belongs to the CarA family. Composed of two chains; the small (or glutamine) chain promotes the hydrolysis of glutamine to ammonia, which is used by the large (or ammonia) chain to synthesize carbamoyl phosphate. Tetramer of heterodimers (alpha,beta)4.

The catalysed reaction is hydrogencarbonate + L-glutamine + 2 ATP + H2O = carbamoyl phosphate + L-glutamate + 2 ADP + phosphate + 2 H(+). The enzyme catalyses L-glutamine + H2O = L-glutamate + NH4(+). It functions in the pathway amino-acid biosynthesis; L-arginine biosynthesis; carbamoyl phosphate from bicarbonate: step 1/1. It participates in pyrimidine metabolism; UMP biosynthesis via de novo pathway; (S)-dihydroorotate from bicarbonate: step 1/3. Small subunit of the glutamine-dependent carbamoyl phosphate synthetase (CPSase). CPSase catalyzes the formation of carbamoyl phosphate from the ammonia moiety of glutamine, carbonate, and phosphate donated by ATP, constituting the first step of 2 biosynthetic pathways, one leading to arginine and/or urea and the other to pyrimidine nucleotides. The small subunit (glutamine amidotransferase) binds and cleaves glutamine to supply the large subunit with the substrate ammonia. The protein is Carbamoyl phosphate synthase small chain of Pseudomonas putida (strain ATCC 47054 / DSM 6125 / CFBP 8728 / NCIMB 11950 / KT2440).